The following is an 85-amino-acid chain: Toxin Cll5c* (85 aa).

The first 17 residues, Met1–Ala17, serve as a signal peptide directing secretion. One can recognise an LCN-type CS-alpha/beta domain in the interval Lys18–Ser83. Disulfide bonds link Cys29-Cys82, Cys33-Cys58, Cys42-Cys63, and Cys46-Cys65. Positions Lys84–Lys85 are cleaved as a propeptide — removed by a carboxypeptidase.

This sequence belongs to the long (4 C-C) scorpion toxin superfamily. Sodium channel inhibitor family. Beta subfamily. As to expression, expressed by the venom gland.

It localises to the secreted. Beta toxins bind voltage-independently at site-4 of sodium channels (Nav) and shift the voltage of activation toward more negative potentials thereby affecting sodium channel activation and promoting spontaneous and repetitive firing. This Centruroides limpidus (Mexican scorpion) protein is Toxin Cll5c*.